The following is a 599-amino-acid chain: Adenine deaminase (599 aa).

The protein belongs to the metallo-dependent hydrolases superfamily. Adenine deaminase family. Mn(2+) is required as a cofactor.

The enzyme catalyses adenine + H2O + H(+) = hypoxanthine + NH4(+). The protein is Adenine deaminase of Clostridium botulinum (strain 657 / Type Ba4).